The sequence spans 374 residues: PqqA peptide cyclase (374 aa).

Residues 7 to 222 form the Radical SAM core domain; the sequence is VTPPLWLLAE…VADYRQRMGA (216 aa). [4Fe-4S] cluster-binding residues include Cys21, Cys25, and Cys28.

It belongs to the radical SAM superfamily. PqqE family. Interacts with PqqD. The interaction is necessary for activity of PqqE. The cofactor is [4Fe-4S] cluster.

It carries out the reaction [PQQ precursor protein] + S-adenosyl-L-methionine = E-Y cross-linked-[PQQ precursor protein] + 5'-deoxyadenosine + L-methionine + H(+). It participates in cofactor biosynthesis; pyrroloquinoline quinone biosynthesis. Functionally, catalyzes the cross-linking of a glutamate residue and a tyrosine residue in the PqqA protein as part of the biosynthesis of pyrroloquinoline quinone (PQQ). In Kluyvera intermedia (Enterobacter intermedius), this protein is PqqA peptide cyclase.